The following is a 118-amino-acid chain: MNAKALYKKKALRDRRKLRIKSKLLGDKLRPRVSVFRSNRYFYAQAIDDVKQSTITHIDGRKMGFKNTQEDAKKLGALFAEELKKAGIERAVYDRNGYLYHGVVAAFAESLRENGIVL.

Belongs to the universal ribosomal protein uL18 family. Part of the 50S ribosomal subunit; part of the 5S rRNA/L5/L18/L25 subcomplex. Contacts the 5S and 23S rRNAs.

This is one of the proteins that bind and probably mediate the attachment of the 5S RNA into the large ribosomal subunit, where it forms part of the central protuberance. The polypeptide is Large ribosomal subunit protein uL18 (Helicobacter pylori (strain J99 / ATCC 700824) (Campylobacter pylori J99)).